A 69-amino-acid chain; its full sequence is Large ribosomal subunit protein bL31 (69 aa).

Residues cysteine 16, cysteine 18, cysteine 36, and cysteine 39 each contribute to the Zn(2+) site.

This sequence belongs to the bacterial ribosomal protein bL31 family. Type A subfamily. Part of the 50S ribosomal subunit. Zn(2+) serves as cofactor.

Functionally, binds the 23S rRNA. The protein is Large ribosomal subunit protein bL31 of Ruminiclostridium cellulolyticum (strain ATCC 35319 / DSM 5812 / JCM 6584 / H10) (Clostridium cellulolyticum).